A 522-amino-acid chain; its full sequence is Protein DETOXIFICATION 31 (522 aa).

A run of 12 helical transmembrane segments spans residues 89 to 109 (GAVTQVFAGHISTLALAAVSI), 113 to 133 (VIAGFSFGIMLGMGSALETLC), 154 to 174 (VILSVTALFLSLIYIFAAPIL), 183 to 203 (ISAMAGIFSIYMIPQIFAYAI), 217 to 237 (IMVMAGISGVVLVIHSFFTWL), 249 to 269 (LALVLNTSWWVIVVAQLVYIF), 299 to 319 (AAMLCLEIWYFMALVLFAGYL), 324 to 344 (VSVAALSICMNILGWAAMVAF), 371 to 391 (VVAVILSTAIGMFIAAGLLFF), 415 to 435 (MLAFCIVINNVQPVLSGVAVG), 441 to 461 (VVAYVNIACYYLFGVPFGLLL), and 471 to 491 (GIWWGMVTGTFVQSIVLTWMI).

This sequence belongs to the multi antimicrobial extrusion (MATE) (TC 2.A.66.1) family.

It is found in the membrane. Its function is as follows. Positively mediates root hair elongation. The protein is Protein DETOXIFICATION 31 of Arabidopsis thaliana (Mouse-ear cress).